Consider the following 251-residue polypeptide: Triosephosphate isomerase (251 aa).

9-11 is a binding site for substrate; sequence NWK. Catalysis depends on His95, which acts as the Electrophile. The active-site Proton acceptor is Glu167. Residues Gly173, Ser213, and 234–235 each bind substrate; that span reads GG. Position 213 is a phosphoserine (Ser213).

It belongs to the triosephosphate isomerase family. Homodimer.

It is found in the cytoplasm. It carries out the reaction D-glyceraldehyde 3-phosphate = dihydroxyacetone phosphate. Its pathway is carbohydrate biosynthesis; gluconeogenesis. It participates in carbohydrate degradation; glycolysis; D-glyceraldehyde 3-phosphate from glycerone phosphate: step 1/1. Involved in the gluconeogenesis. Catalyzes stereospecifically the conversion of dihydroxyacetone phosphate (DHAP) to D-glyceraldehyde-3-phosphate (G3P). This is Triosephosphate isomerase from Anoxybacillus flavithermus (strain DSM 21510 / WK1).